The sequence spans 118 residues: MNKRELGNSGEEKAVEFLKKMGYEILHRNFRCKLGEVDIIAKEGNTIVFVEVKTRRSLKFGYPSEAITMTKQRHLKRVAEYFVQRQKAKNCMYRFDVVEVYMNVKNEVLDINLIKNAF.

The protein belongs to the UPF0102 family.

The sequence is that of UPF0102 protein Csac_2148 from Caldicellulosiruptor saccharolyticus (strain ATCC 43494 / DSM 8903 / Tp8T 6331).